We begin with the raw amino-acid sequence, 287 residues long: U-megalopygitoxin(8)-Mo12 (287 aa).

Residues 1–17 form the signal peptide; it reads MNLQYLILSLLSTTVYG. The residue at position 284 (H284) is a Histidine amide.

It belongs to the megalysin family. Post-translationally, contains 2 disulfide bonds. In terms of tissue distribution, expressed by the venom apparatus.

The protein localises to the secreted. The protein resides in the target cell membrane. In terms of biological role, may function as a large pore-forming protein. The polypeptide is U-megalopygitoxin(8)-Mo12 (Megalopyge opercularis (Southern flannel moth)).